Consider the following 152-residue polypeptide: SsrA-binding protein (152 aa).

This sequence belongs to the SmpB family.

The protein localises to the cytoplasm. In terms of biological role, required for rescue of stalled ribosomes mediated by trans-translation. Binds to transfer-messenger RNA (tmRNA), required for stable association of tmRNA with ribosomes. tmRNA and SmpB together mimic tRNA shape, replacing the anticodon stem-loop with SmpB. tmRNA is encoded by the ssrA gene; the 2 termini fold to resemble tRNA(Ala) and it encodes a 'tag peptide', a short internal open reading frame. During trans-translation Ala-aminoacylated tmRNA acts like a tRNA, entering the A-site of stalled ribosomes, displacing the stalled mRNA. The ribosome then switches to translate the ORF on the tmRNA; the nascent peptide is terminated with the 'tag peptide' encoded by the tmRNA and targeted for degradation. The ribosome is freed to recommence translation, which seems to be the essential function of trans-translation. This is SsrA-binding protein from Sulfurihydrogenibium sp. (strain YO3AOP1).